We begin with the raw amino-acid sequence, 312 residues long: Ubiquinone biosynthesis protein COQ9, mitochondrial (312 aa).

A mitochondrion-targeting transit peptide spans 1–45 (MAATAAVSGVLRRLGWRLLQLRCLPVARCQSPLMPRAFHTAVGFR). An SIFI-degron motif is present at residues 17 to 32 (RLLQLRCLPVARCQSP). A disordered region spans residues 43-92 (GFRSSEEQRQQPPHSSQQHSETQGPEFSRPPPRYTDQSGEEEEDYESEEQ). A compositionally biased stretch (low complexity) spans 52–63 (QQPPHSSQQHSE). Ser-80 is modified (phosphoserine). Acidic residues predominate over residues 80–91 (SGEEEEDYESEE). Residue Lys-169 is modified to N6-acetyllysine. Residue Arg-238 coordinates a 1,2-diacylglycero-3-phosphoethanolamine.

The protein belongs to the COQ9 family. In terms of assembly, homodimer. Heterodimer; two heterodimers of COQ7:COQ9 come together on the same side of the lipid pseudo-bilayer and form a curved tetramer with a hydrophobic surface suitable for membrane interaction. These two tetramers assemble into a soluble octamer with a pseudo-bilayer of lipids captured within. Interacts with COQ7; this interaction allows ubiquinone (CoQ) isoprene intermediates presentation to COQ7 and facilitates the COQ7-mediated hydroxylase step. Post-translationally, in response to mitochondrial stress, the precursor protein is ubiquitinated by the SIFI complex in the cytoplasm before mitochondrial import, leading to its degradation. Within the SIFI complex, UBR4 initiates ubiquitin chain that are further elongated or branched by KCMF1.

It is found in the mitochondrion. The protein operates within cofactor biosynthesis; ubiquinone biosynthesis. In terms of biological role, membrane-associated protein that warps the membrane surface to access and bind aromatic isoprenes with high specificity, including ubiquinone (CoQ) isoprene intermediates and presents them directly to COQ7, therefore facilitating the COQ7-mediated hydroxylase step. Participates in the biosynthesis of coenzyme Q, also named ubiquinone, an essential lipid-soluble electron transporter for aerobic cellular respiration. The sequence is that of Ubiquinone biosynthesis protein COQ9, mitochondrial from Rattus norvegicus (Rat).